The primary structure comprises 234 residues: Purine nucleoside phosphorylase DeoD-type (234 aa).

His-4 provides a ligand contact to a purine D-ribonucleoside. Phosphate-binding positions include Gly-20, Arg-24, Arg-43, and 87–90 (RIGS). A purine D-ribonucleoside is bound by residues Glu-162, 179-181 (EME), and 203-204 (SD). Asp-204 functions as the Proton donor in the catalytic mechanism.

Belongs to the PNP/UDP phosphorylase family. Homohexamer; trimer of homodimers.

The catalysed reaction is a purine D-ribonucleoside + phosphate = a purine nucleobase + alpha-D-ribose 1-phosphate. It carries out the reaction a purine 2'-deoxy-D-ribonucleoside + phosphate = a purine nucleobase + 2-deoxy-alpha-D-ribose 1-phosphate. In terms of biological role, catalyzes the reversible phosphorolytic breakdown of the N-glycosidic bond in the beta-(deoxy)ribonucleoside molecules, with the formation of the corresponding free purine bases and pentose-1-phosphate. This chain is Purine nucleoside phosphorylase DeoD-type, found in Roseobacter denitrificans (strain ATCC 33942 / OCh 114) (Erythrobacter sp. (strain OCh 114)).